The primary structure comprises 167 residues: Ureidoglycolate lyase (167 aa).

The protein belongs to the ureidoglycolate lyase family. Homodimer. Ni(2+) is required as a cofactor.

The catalysed reaction is (S)-ureidoglycolate = urea + glyoxylate. The protein operates within nitrogen metabolism; (S)-allantoin degradation. In terms of biological role, catalyzes the catabolism of the allantoin degradation intermediate (S)-ureidoglycolate, generating urea and glyoxylate. Involved in the utilization of allantoin as nitrogen source. The sequence is that of Ureidoglycolate lyase from Pseudomonas entomophila (strain L48).